Consider the following 534-residue polypeptide: Putative ammonium transporter 1 (534 aa).

11 consecutive transmembrane segments (helical) span residues 31 to 51 (SFFL…FAYL), 69 to 89 (LLDS…LAYG), 115 to 135 (FFFQ…AVAE), 139 to 159 (FITY…VLTH), 184 to 204 (FAGS…AAWI), 223 to 243 (ILGH…FGFL), 263 to 283 (ALAM…YLGV), 291 to 311 (WTLL…CAGC), 318 to 338 (ACIW…KLMI), 346 to 366 (LDAF…SSII), and 401 to 421 (ICAL…FWIL).

It belongs to the ammonia transporter channel (TC 1.A.11.2) family.

The protein resides in the membrane. Its function is as follows. Involved in the uptake of ammonia. The sequence is that of Putative ammonium transporter 1 (amt-1) from Caenorhabditis elegans.